Here is a 200-residue protein sequence, read N- to C-terminus: Large ribosomal subunit protein bL25 (200 aa).

Disordered stretches follow at residues 1 to 20 (MTIE…ASRR) and 179 to 200 (PVVA…GEAA).

This sequence belongs to the bacterial ribosomal protein bL25 family. CTC subfamily. As to quaternary structure, part of the 50S ribosomal subunit; part of the 5S rRNA/L5/L18/L25 subcomplex. Contacts the 5S rRNA. Binds to the 5S rRNA independently of L5 and L18.

This is one of the proteins that binds to the 5S RNA in the ribosome where it forms part of the central protuberance. The chain is Large ribosomal subunit protein bL25 from Azoarcus sp. (strain BH72).